The sequence spans 3093 residues: MVFESVVVDVLNRFLGDYVVDLDTSQLSLGIWKGAVALKNLQIKENALSQLDVPFKVKVGHIGNLKLIIPWKNLYSQPVEAVLEEIYLLIVPSSRIKYDPIKEEKQLMEAKQQELKRIEEAKQKVVDQEQHLLEKQDTFAEKLVTQIIKNLQVKISSIHIRYEDDITNRDKPLSFGISLQNLSMQTTDQYWVPCLHDETEKLVRKLIRLDNLFAYWNVKSQMFYLNDYDDSLDDLRNGIVNENIVPEGYDFVFRPISANAKLVMNRRSDFDFSAPKINLDVELHNIAIEFNKPQYFSIMELLESVDMMTQNMPYRKFRPDVPLHHHAREWWAYAIHGVLEVNVCPRLRMWSWKHIRKHRGKMKQYKELYKKKLTSKKPPGELLVSLEELEKTLDVLNITIARQQAEVEVKKAGYKIYKEGVKDPEDNKGWFSWLWSWSEQNTNEQQPDVKPGILEEMLTPEEKALLYEAIGYSETAVDPTLPKTFEALKFFVHLKSMSVVLRENHQKPELIDIVIEEFSTLIVQRPGAQAVKFETKIDSFHITGLPDNSEKPRLLSSLDDAMSLFQITFEINPLDETVTQRCIIEAEPLEIIYDARTVNSIVEFFRPPKEVHLAQLTSATLTKLEEFRNKTATGLLYIIETQKVLDLRINLKASYIIVPQDGIFSPTSNLLLLDLGHLKVTSKSRSELPDVKQGEANLKEIMDIAYDSFDIQLTSIQLLYSRVGDNWREARKLNVSTQHILVPMHFNLELSKAMVFMDVRMPKFKIFGKLPLISLRISDKKLQGIMELVESIPKPEPVTEVSAPVKSFQIQTSTSLGTSQISQKIIPLLELPSVSEDDSEEEFFDAPCSPLDEPLQFPTGVKSIRTRKLQKQDCSVNMTTFKIRFEVPKVLIEFYHLVGDCELSVVEIHVLGLGTEIEIRTYDLKANAFLKEFCLKCPEYLDENRKPVYLVTTLDNTMEDLLTLEYVKAEKNVPNLKSTYNNVLQLIKVNFSSLDIHLHTEALLNTINYLHNILPQSEEKSAPVSTTETEDKGDVIKKLALKLSTNEDIITLQILAELSCLQIFIQDQKRNISEIKIEGLDSEMIMRPSETEINAKLRNIIVLDSDITAIYKKAVYITGKEVFSFKMVSYMDATAGSAYTDMNVVDIQVNLVVGCIEVVFVTKFLCSILAFIDNFQAAKQALAEATVQAAGMAATGVKELARRSSRMALDINIKAPVVVIPQSPVSENVFVADFGLITMTNTFHMITESQSSPPPVIDLITIKLSEMRLYRSQFINDAYQEVLDLLLPLNLEVVVERNLCWEWYQEVPCFNVNAQLKPMEFILSQEDITTIFKTLHGNIWYEKDGSASPAVTKDQYSATSGVTTNASHHSGGATVVTAAVVEVHSRASLVKTTLNVSFKTDYLTMVLYSPGPKQASFTDVRDPSLKLAEFKLENIISTLKMYTDDSTFSSFSLKNCILDDKRPHVKKATPRMIGLTVGFDKKDMMDIKYRKVRDGCVTDAVFQEMYICASVEFLQTVANVFLEAYTTGTAVETSVQTWTAKEEVPTQELEKWEINVIIKNPEIVFVADMTKNDAPALVITTQCEICYKGNLENSTMTAAIKDLQVRACPFLPIKRKGKVTTVLQPCDLFYQTTQAGTDPQVIDMSVKSLTLKVSPVIINTMITITSALYTTKETIPEETASSTAQLWEKKDTKTLKMWFLEESNETEKIAPTTELIPKGEMIKMNIDSIFIVLEAGIGHRTVPMLLAKSRFSGEGKNWSSLINLHCQLELEVHYYNEMFGVWEPLLEPLEIDQTEDFRPWNLGIKMKKKAKKAIVESDPEEENYKVPEYKTVISFHSKDQLNITLSKCGLVMLNNLAKAFTEAATGSSADFVKDLAPFIILNSLGLTISVSPSDSFSVLNIPMAKSYVLKNEESLSMDYVRTKDNDHFNAMTSLSSKLFFILLTPVNHSTADKIPLTKVGRRLYTVRHRESGVERSIVCQIDTVEGSKKVTIRSPVQIRNHFSVPLSVYEGDTLLGTASPENEFNIPLGSYRSFLFLKPEDEDYQRCEGIDFEEIVKNDGALLKKKCRSQNPSKKSFLINIVPEKDNLTSLSVYSEDGWDLPYIMHLWPPILLRNLLPYKIAYYIEGIENSVFTLSEGHSAQICTVQLDKARLRLKLLDYLNHDWKSEYHIKPNQQDISFVNFTCITEMEKTDLDIAVHMTYNTGQTVVAFHSPYWMVNKTGRMLQYKADGIHRKHPPNYKKPVLFSFQPNHFFNNNKVQLMVTDSELSDQFSIDTVGSHGAVKCKGLKMDYQVGVTIDLSSFNITRIVTFTPFYMIKNKSKYRISVAEEGTDKWLSLDLEQCIPFWPEDASSKLLIQVEGSEDPPKRIYFNKQENCILLRLDNELGGIIAEVNLAEHSTVITFLDYHDGAATFLLINHTKNELVQYNQSSLSEIEDSLPPGKAVFYTWADPVGSRRLKWRCRKSHGEVTQKDDMMMPIDLGKKTIYLVSFFEGLQRIILFTEDPKVFKVTYESEKAELAEQEIAVALQDVGISLVNNYTKQEVAYIGITSSDVVWETKPKKKARWKPMSVKHTEKLEREFKEYTESSPSEDKVIELDTNIPVRLTPTGHNMKILQPRVIALRRNYLPALKVEYNTSAHQSSFRIQIYRIQIQNQIHGAVFPFVFYPVKPPKSVTMDSAPKPFTDVSIVMRSAGHSQISRIKYFKVLIQEMDLRLDLGFIYALTDLMTEAEVTENTEVELFHKDIEAFKEEYKTASLVDQSQVSLYEYFHISPLKLHLSVSLSSGGEEAKDSKQNGGLIPVHSLNLLLKSIGATLTDVQDVVFKLAFFELNYQFHTTSDLQSEVIRHYSKQAIKQMYVLILGLDVLGNPFGLIREFSEGVEAFFYEPYQGAIQGPEEFVEGMALGLKALVGGAVGGLAGAASKITGAMAKGVAAMTMDEDYQQKRREAMNKQPAGFREGITRGGKGLVSGFVSGITGIVTKPIKGAQKEGAAGFFKGVGKGLVGAVARPTGGIIDMASSTFQGIKRATETSEVESLRPPRFFNEDGVIRPYRLRDGTGNQMLQKIQFCREWIMTHSSSSDDDDGDDDESDLNR.

The Chorein N-terminal domain maps to 3 to 116 (FESVVVDVLN…LMEAKQQELK (114 aa)). The stretch at 373 to 406 (LTSKKPPGELLVSLEELEKTLDVLNITIARQQAE) is one TPR 1 repeat. A Phosphoserine modification is found at Ser-839. The FFAT signature appears at 842-848 (EFFDAPC). Ser-1416 is subject to Phosphoserine. Positions 2209–2454 (VAFHSPYWMV…VFYTWADPVG (246 aa)) constitute an SHR-BD domain. The stretch at 2860-2898 (ILGLDVLGNPFGLIREFSEGVEAFFYEPYQGAIQGPEEF) is one TPR 2 repeat. The tract at residues 2953-3027 (PAGFREGITR…SSTFQGIKRA (75 aa)) is required for lipid droplet localization.

This sequence belongs to the VPS13 family. In terms of assembly, interacts (via FFAT motif) with VAPA and VAPB. Interacts with RAB7A. Interacts with XK.

Its subcellular location is the mitochondrion outer membrane. It localises to the endoplasmic reticulum membrane. The protein localises to the endosome membrane. It is found in the lysosome membrane. The protein resides in the lipid droplet. Its subcellular location is the golgi apparatus. It localises to the cytoplasmic vesicle. The protein localises to the secretory vesicle. It is found in the neuronal dense core vesicle. Its function is as follows. Mediates the transfer of lipids between membranes at organelle contact sites. Required for the formation or stabilization of ER-mitochondria contact sites which enable transfer of lipids between the ER and mitochondria. Negatively regulates lipid droplet size and motility. Required for efficient lysosomal protein degradation. This chain is Intermembrane lipid transfer protein VPS13A (VPS13A), found in Macaca fascicularis (Crab-eating macaque).